We begin with the raw amino-acid sequence, 156 residues long: MPRRRVIGQRKILPDPKFGSELLAKFVNILMVDGKKSTAEAIVYTALETLAQRSGKDHLEAFEVALDNVRPTVEVKSRRVGGSTYQVPVEVRPVRRNALAMRWIVEAARKRGDKSMALRLANELSDAAENKGTAVKKREDVHRMAEANKAFAHYRW.

Belongs to the universal ribosomal protein uS7 family. In terms of assembly, part of the 30S ribosomal subunit. Contacts proteins S9 and S11.

In terms of biological role, one of the primary rRNA binding proteins, it binds directly to 16S rRNA where it nucleates assembly of the head domain of the 30S subunit. Is located at the subunit interface close to the decoding center, probably blocks exit of the E-site tRNA. In Pectobacterium carotovorum subsp. carotovorum (strain PC1), this protein is Small ribosomal subunit protein uS7.